The chain runs to 688 residues: Homoaconitase, mitochondrial (688 aa).

The N-terminal 19 residues, 1 to 19, are a transit peptide targeting the mitochondrion; the sequence is MALLYLSTRSSLKKTGARC. Cysteine 346, cysteine 406, and cysteine 409 together coordinate [4Fe-4S] cluster.

This sequence belongs to the aconitase/IPM isomerase family. Requires [4Fe-4S] cluster as cofactor.

The protein localises to the mitochondrion. It carries out the reaction (2R,3S)-homoisocitrate = cis-homoaconitate + H2O. The protein operates within amino-acid biosynthesis; L-lysine biosynthesis via AAA pathway; L-alpha-aminoadipate from 2-oxoglutarate: step 3/5. In terms of biological role, catalyzes the reversible hydration of cis-homoaconitate to (2R,3S)-homoisocitrate, a step in the alpha-aminoadipate pathway for lysine biosynthesis. This is Homoaconitase, mitochondrial (LYS4) from Debaryomyces hansenii (strain ATCC 36239 / CBS 767 / BCRC 21394 / JCM 1990 / NBRC 0083 / IGC 2968) (Yeast).